The chain runs to 375 residues: Queuine tRNA-ribosyltransferase (375 aa).

Asp-93 functions as the Proton acceptor in the catalytic mechanism. Substrate is bound by residues 93-97, Asp-147, Gln-191, and Gly-218; that span reads DSGGF. Residues 249–255 are RNA binding; the sequence is GVGTPLD. Asp-268 serves as the catalytic Nucleophile. Residues 273 to 277 form an RNA binding; important for wobble base 34 recognition region; it reads TRNAR. Positions 306, 308, 311, and 337 each coordinate Zn(2+).

This sequence belongs to the queuine tRNA-ribosyltransferase family. Homodimer. Within each dimer, one monomer is responsible for RNA recognition and catalysis, while the other monomer binds to the replacement base PreQ1. It depends on Zn(2+) as a cofactor.

The enzyme catalyses 7-aminomethyl-7-carbaguanine + guanosine(34) in tRNA = 7-aminomethyl-7-carbaguanosine(34) in tRNA + guanine. Its pathway is tRNA modification; tRNA-queuosine biosynthesis. Its function is as follows. Catalyzes the base-exchange of a guanine (G) residue with the queuine precursor 7-aminomethyl-7-deazaguanine (PreQ1) at position 34 (anticodon wobble position) in tRNAs with GU(N) anticodons (tRNA-Asp, -Asn, -His and -Tyr). Catalysis occurs through a double-displacement mechanism. The nucleophile active site attacks the C1' of nucleotide 34 to detach the guanine base from the RNA, forming a covalent enzyme-RNA intermediate. The proton acceptor active site deprotonates the incoming PreQ1, allowing a nucleophilic attack on the C1' of the ribose to form the product. After dissociation, two additional enzymatic reactions on the tRNA convert PreQ1 to queuine (Q), resulting in the hypermodified nucleoside queuosine (7-(((4,5-cis-dihydroxy-2-cyclopenten-1-yl)amino)methyl)-7-deazaguanosine). In Nitratidesulfovibrio vulgaris (strain DP4) (Desulfovibrio vulgaris), this protein is Queuine tRNA-ribosyltransferase.